A 216-amino-acid chain; its full sequence is Probable nicotinate-nucleotide adenylyltransferase (216 aa).

This sequence belongs to the NadD family.

The enzyme catalyses nicotinate beta-D-ribonucleotide + ATP + H(+) = deamido-NAD(+) + diphosphate. Its pathway is cofactor biosynthesis; NAD(+) biosynthesis; deamido-NAD(+) from nicotinate D-ribonucleotide: step 1/1. In terms of biological role, catalyzes the reversible adenylation of nicotinate mononucleotide (NaMN) to nicotinic acid adenine dinucleotide (NaAD). The chain is Probable nicotinate-nucleotide adenylyltransferase from Klebsiella pneumoniae (strain 342).